Consider the following 87-residue polypeptide: uncharacterized protein (87 aa).

The 84-residue stretch at 4–87 (SKIIILNNNK…TISGSILIKI (84 aa)) folds into the 2Fe-2S ferredoxin-type domain. [2Fe-2S] cluster is bound by residues cysteine 39, cysteine 44, cysteine 47, and cysteine 75.

[2Fe-2S] cluster is required as a cofactor.

This is an uncharacterized protein from Buchnera aphidicola subsp. Baizongia pistaciae (strain Bp).